The following is an 821-amino-acid chain: High affinity potassium transporter (821 aa).

Positions 1–10 (MSDSQSNKQN) are enriched in polar residues. The segment at 1 to 47 (MSDSQSNKQNQGEDDNNVSSSIESNENYPFRLNDEESEPQSSTTESM) is disordered. At 1–57 (MSDSQSNKQNQGEDDNNVSSSIESNENYPFRLNDEESEPQSSTTESMLKAKKQSWRQ) the chain is on the cytoplasmic side. Residues 17–27 (NVSSSIESNEN) are compositionally biased toward low complexity. A helical membrane pass occupies residues 58–78 (VLMLGFSSLGAIYGDIGTSPL). The Extracellular segment spans residues 79 to 101 (YVLNSIKYPNSSPTEEDIYGAIS). Residues 102 to 122 (IIFYLFTFIVIFKYILIVLFL) traverse the membrane as a helical segment. Topologically, residues 123–190 (GTNDGEGGQV…KASGFKTNPK (68 aa)) are cytoplasmic. Residues 191–211 (LIKFISKFILFGCFFGCSLVM) form a helical membrane-spanning segment. Residues 212 to 238 (SDGLLTPTTSVLSAIAGIQIANPSFND) are Extracellular-facing. The helical transmembrane segment at 239–259 (VLAVSEVVLIVLFLIQQFGSN) threads the bilayer. A topological domain (cytoplasmic) is located at residue K260. A helical transmembrane segment spans residues 261 to 281 (ISFTFAPIIFLWLIGLIISGI). The Extracellular segment spans residues 282 to 306 (YNIVKFHPAVFKSLSPYYAIQLLKH). A helical transmembrane segment spans residues 307–327 (SGIDVFSGAMLSITGTEAMFA). Topologically, residues 328–340 (DVGHFGRLPIQLT) are cytoplasmic. A helical membrane pass occupies residues 341-361 (LTLFVYPALIICYLGQGAYII). Residues 362–386 (KHPEALSNPFFYSIPGGLNSWIYWV) lie on the Extracellular side of the membrane. Residues 387 to 407 (MFVLATLSTIIASQALILGVF) traverse the membrane as a helical segment. The Cytoplasmic segment spans residues 408–434 (SITSQLINLDCFPNFKIIHVSKKYAGK). The helical transmembrane segment at 435-455 (VYIPAINWLLMIGVCATTAGF) threads the bilayer. At 456 to 463 (KNSNNVTA) the chain is on the extracellular side. An N-linked (GlcNAc...) asparagine glycan is attached at N460. Residues 464 to 484 (AYGLGITLDFLVTSSLIMVCM) traverse the membrane as a helical segment. At 485 to 491 (TYVYNWN) the chain is on the cytoplasmic side. The helical transmembrane segment at 492–512 (ILIPITYALIFLPLEVIMVIS) threads the bilayer. Residues 513 to 516 (NLKK) lie on the Extracellular side of the membrane. Residues 517–537 (ITHGAWFPLMMSGIFMMFLSF) form a helical membrane-spanning segment. Over 538–821 (WRWARSRKVN…KMFLGGVVRI (284 aa)) the chain is Cytoplasmic.

It belongs to the HAK/KUP transporter (TC 2.A.72) family.

It localises to the membrane. In terms of biological role, major high-affinity potassium uptake protein. This is High affinity potassium transporter (HAK1) from Schwanniomyces occidentalis (Yeast).